The sequence spans 277 residues: Glutamate racemase (277 aa).

Residues Asp-13–Ser-14 and Tyr-45–Gly-46 contribute to the substrate site. The active-site Proton donor/acceptor is the Cys-76. Residue Asn-77–Thr-78 participates in substrate binding. The active-site Proton donor/acceptor is the Cys-186. Position 187–188 (Thr-187–His-188) interacts with substrate.

It belongs to the aspartate/glutamate racemases family.

The enzyme catalyses L-glutamate = D-glutamate. The protein operates within cell wall biogenesis; peptidoglycan biosynthesis. In terms of biological role, provides the (R)-glutamate required for cell wall biosynthesis. This Ralstonia nicotianae (strain ATCC BAA-1114 / GMI1000) (Ralstonia solanacearum) protein is Glutamate racemase.